The chain runs to 247 residues: DNA polymerase sliding clamp (247 aa).

Belongs to the PCNA family. In terms of assembly, homotrimer. The subunits circularize to form a toroid; DNA passes through its center. Replication factor C (RFC) is required to load the toroid on the DNA.

Its function is as follows. Sliding clamp subunit that acts as a moving platform for DNA processing. Responsible for tethering the catalytic subunit of DNA polymerase and other proteins to DNA during high-speed replication. The sequence is that of DNA polymerase sliding clamp from Methanocorpusculum labreanum (strain ATCC 43576 / DSM 4855 / Z).